The following is a 500-amino-acid chain: Glucosylglycerol-phosphate synthase (500 aa).

It belongs to the glycosyltransferase 20 family.

It catalyses the reaction ADP-alpha-D-glucose + sn-glycerol 3-phosphate = 2-O-(alpha-D-glucopyranosyl)-sn-glycerol 3-phosphate + ADP + H(+). Its pathway is glycan metabolism; glucosylglycerol biosynthesis. In terms of biological role, involved in salt tolerance by producing GG-phosphate from ADP-glucose and glycerol-3-phosphate (G3P), an intermediate in the synthesis of the osmolyte glucosylglycerol (GG). The polypeptide is Glucosylglycerol-phosphate synthase (ggpS) (Picosynechococcus sp. (strain ATCC 27264 / PCC 7002 / PR-6) (Agmenellum quadruplicatum)).